The sequence spans 258 residues: tRNA pseudouridine synthase A (258 aa).

Asp-52 acts as the Nucleophile in catalysis. Position 110 (Tyr-110) interacts with substrate.

The protein belongs to the tRNA pseudouridine synthase TruA family. As to quaternary structure, homodimer.

It carries out the reaction uridine(38/39/40) in tRNA = pseudouridine(38/39/40) in tRNA. Its function is as follows. Formation of pseudouridine at positions 38, 39 and 40 in the anticodon stem and loop of transfer RNAs. This chain is tRNA pseudouridine synthase A, found in Francisella tularensis subsp. holarctica (strain LVS).